A 187-amino-acid polypeptide reads, in one-letter code: GTP cyclohydrolase 1 (187 aa).

Zn(2+) contacts are provided by Cys76, His79, and Cys148.

Belongs to the GTP cyclohydrolase I family. In terms of assembly, toroid-shaped homodecamer, composed of two pentamers of five dimers.

It carries out the reaction GTP + H2O = 7,8-dihydroneopterin 3'-triphosphate + formate + H(+). It functions in the pathway cofactor biosynthesis; 7,8-dihydroneopterin triphosphate biosynthesis; 7,8-dihydroneopterin triphosphate from GTP: step 1/1. In Streptococcus agalactiae serotype Ia (strain ATCC 27591 / A909 / CDC SS700), this protein is GTP cyclohydrolase 1.